A 515-amino-acid polypeptide reads, in one-letter code: Fatty acyl-CoA reductase 1 (515 aa).

Topologically, residues 1-465 (MVSIPEYYEG…ARKHLNKLRN (465 aa)) are cytoplasmic. The tract at residues 451–507 (SGLPAARKHLNKLRNIRYGFNTILVILIWRIFIARSQMARNIWYFVVSLCYKFLSYF) is necessary and sufficient for PEX19-mediated localization into peroxisome membrane. The helical transmembrane segment at 466 to 483 (IRYGFNTILVILIWRIFI) threads the bilayer. Over 484–515 (ARSQMARNIWYFVVSLCYKFLSYFRASSTMRY) the chain is Peroxisomal.

It belongs to the fatty acyl-CoA reductase family. As to quaternary structure, interacts with PEX19; PEX19 mediates the targeting of FAR1 to peroxisomes.

Its subcellular location is the peroxisome membrane. It carries out the reaction a long-chain fatty acyl-CoA + 2 NADPH + 2 H(+) = a long-chain primary fatty alcohol + 2 NADP(+) + CoA. The catalysed reaction is hexadecanoyl-CoA + 2 NADPH + 2 H(+) = hexadecan-1-ol + 2 NADP(+) + CoA. It catalyses the reaction octadecanoyl-CoA + 2 NADPH + 2 H(+) = octadecan-1-ol + 2 NADP(+) + CoA. The enzyme catalyses eicosanoyl-CoA + 2 NADPH + 2 H(+) = eicosan-1-ol + 2 NADP(+) + CoA. It carries out the reaction (9Z)-octadecenoyl-CoA + 2 NADPH + 2 H(+) = (9Z)-octadecen-1-ol + 2 NADP(+) + CoA. The catalysed reaction is (9Z,12Z)-octadecadienoyl-CoA + 2 NADPH + 2 H(+) = (9Z,12Z)-octadecadien-1-ol + 2 NADP(+) + CoA. It catalyses the reaction 16-methylheptadecanoyl-CoA + 2 NADPH + 2 H(+) = 16-methylheptadecan-1-ol + 2 NADP(+) + CoA. The enzyme catalyses 18-methylnonadecanoyl-CoA + 2 NADPH + 2 H(+) = 18-methylnonadecan-1-ol + 2 NADP(+) + CoA. Functionally, catalyzes the reduction of saturated and unsaturated C16 or C18 fatty acyl-CoA to fatty alcohols. It plays an essential role in the production of ether lipids/plasmalogens which synthesis requires fatty alcohols. In parallel, it is also required for wax monoesters production since fatty alcohols also constitute a substrate for their synthesis. The protein is Fatty acyl-CoA reductase 1 of Homo sapiens (Human).